The following is a 424-amino-acid chain: Probable ribonuclease FAU-1 (424 aa).

The protein belongs to the FAU-1 family.

Probable RNase involved in rRNA stability through maturation and/or degradation of precursor rRNAs. Binds to RNA in loop regions with AU-rich sequences. The sequence is that of Probable ribonuclease FAU-1 from Saccharolobus solfataricus (strain ATCC 35092 / DSM 1617 / JCM 11322 / P2) (Sulfolobus solfataricus).